Consider the following 374-residue polypeptide: Protein RecA (374 aa).

ATP is bound at residue 77–84 (GPESSGKT). The tract at residues 355 to 374 (AAKTAAADKSAPAKASEAAA) is disordered.

It belongs to the RecA family.

Its subcellular location is the cytoplasm. Functionally, can catalyze the hydrolysis of ATP in the presence of single-stranded DNA, the ATP-dependent uptake of single-stranded DNA by duplex DNA, and the ATP-dependent hybridization of homologous single-stranded DNAs. It interacts with LexA causing its activation and leading to its autocatalytic cleavage. The chain is Protein RecA from Synechococcus sp. (strain CC9605).